Reading from the N-terminus, the 328-residue chain is MPSTKVAALSAVLALASTVAGHGYVQNIVIDGESYSGYIVTQFPYESNPPAVIGWATTATDLGYVDPTEYTNADIICHKNATPGALSAPVAAGGTVELQWTTWPDSHHGPVISYLANCNGNCSTVDKTKLDFVKIDASGLIDDTTVPGTWASDQLIAANNSWTVTIPETIAPGNYVLRHEIIALHSAENTDGAQNYPQCINLEITGSGTASPTGTPGEELYTPTDPGILVNIYQSLSTYVIPGPTLWSGAANNAVASATAAASATATPTTLVTSVASATDSPSTVAPASSTTATSVLTSVVPSVTSFVPVVTVTDVVTVTTVITTTVF.

A signal peptide spans 1 to 21; it reads MPSTKVAALSAVLALASTVAG. Residue histidine 22 coordinates Cu(2+). A Methylhistidine modification is found at histidine 22. 2 disulfide bridges follow: cysteine 77–cysteine 199 and cysteine 118–cysteine 122. An N-linked (GlcNAc...) asparagine glycan is attached at asparagine 80. A Cu(2+)-binding site is contributed by histidine 107. Residues asparagine 121 and asparagine 159 are each glycosylated (N-linked (GlcNAc...) asparagine). Positions 185 and 194 each coordinate O2. Residue tyrosine 196 coordinates Cu(2+). Residues serine 235 and serine 237 are each glycosylated (O-linked (Man...) serine). O-linked (Man...) threonine glycosylation is found at threonine 238 and threonine 245.

It belongs to the polysaccharide monooxygenase AA9 family. The cofactor is Cu(2+). The catalytically essential N-terminal histidine His-22 is post-translationally modified by methylation to prevent protonation of the histidine side chain, and protect the critical active site of the enzyme from oxidative damage.

It localises to the secreted. The enzyme catalyses [(1-&gt;4)-beta-D-glucosyl]n+m + reduced acceptor + O2 = 4-dehydro-beta-D-glucosyl-[(1-&gt;4)-beta-D-glucosyl]n-1 + [(1-&gt;4)-beta-D-glucosyl]m + acceptor + H2O.. Functionally, lytic polysaccharide monooxygenase (LPMO) that depolymerizes crystalline and amorphous polysaccharides via the oxidation of scissile alpha- or beta-(1-4)-glycosidic bonds, yielding C1 and C4 oxidation products. Catalysis by LPMOs requires the reduction of the active-site copper from Cu(II) to Cu(I) by a reducing agent and H(2)O(2) or O(2) as a cosubstrate. Shows activity on cellulosic substrates (Avicel, carboxymethylcellulose) and xylan. The chain is AA9 family lytic polysaccharide monooxygenase A from Talaromyces verruculosus (Penicillium verruculosum).